The following is a 3797-amino-acid chain: A-kinase anchor protein 9 (3797 aa).

Residues 1 to 140 (MEDEERQRKL…SSEQGAQSSQ (140 aa)) are disordered. Composition is skewed to polar residues over residues 50–65 (HTDQ…SSQR) and 92–108 (EIST…NGCN). Positions 115–124 (KPTDPLREEE) are enriched in basic and acidic residues. Residue serine 139 is modified to Phosphoserine. 2 coiled-coil regions span residues 140–607 (QTCL…LRTQ) and 640–976 (IHYK…LLAN). Serine 1288 bears the Phosphoserine mark. 3 disordered regions span residues 1643–1668 (STQT…LERS), 2323–2343 (VVST…EESF), and 2419–2454 (SDNL…ASRT). 2 stretches are compositionally biased toward basic and acidic residues: residues 1648–1668 (DGHD…LERS) and 2328–2343 (QQRE…EESF). The stretch at 1808–2377 (SRLQAAVEKL…MTHMNNVLKE (570 aa)) forms a coiled coil. A compositionally biased stretch (polar residues) spans 2438-2454 (KQTSLTRLQESPEASRT). The interval 2498 to 2510 (DLQRSLEKFAAAL) is PKA-RII subunit binding domain. Disordered regions lie at residues 2604 to 2695 (LEEA…SSSG) and 3271 to 3296 (MEKD…QKKM). Residues 2606 to 2615 (EAEERPEEGG) show a composition bias toward acidic residues. The segment covering 2642–2669 (PLTEAKEKLSYSLEKEKRTGEQESREAP) has biased composition (basic and acidic residues). Residues 2975–3325 (LQKADRRSLL…QVYKLDLEGK (351 aa)) adopt a coiled-coil conformation. Residues 3279–3294 (QKTLQTEQEANTQGQK) show a composition bias toward polar residues. Phosphoserine is present on residues serine 3732, serine 3755, and serine 3787.

As to quaternary structure, interacts with the regulatory region of protein kinase N (PKN), protein phosphatase 2A (PP2A), protein phosphatase 1 (PP1) and the immature non-phosphorylated form of PKC epsilon. Interacts with CIP4 and FNBP1. Interacts with chloride intracellular channel proteins CLIC1, CLIC4 and CLIC5. CSNK1D binding promotes its centrosomal subcellular location. Interacts with GM130/GOLGA2; leading to recruitment to the Golgi apparatus. Interacts with KCNQ1; targets protein kinase A (PKA) catalytic and regulatory subunits and protein phosphatase 1 (PP1), to the heterodimer KCNQ1-KCNE1. Interacts with PDE4DIP isoform 2; this interaction stabilizes both proteins. In complex with PDE4DIP isoform 2, recruits CAMSAP2 to the Golgi apparatus. Forms a pericentrosomal complex with CDK5RAP2, EB1/MAPRE1 and PDE4DIP isoform 2; within this complex, MAPRE1 binding to CDK5RAP2 may be mediated by PDE4DIP. Interacts with MAPRE1 and MAPRE3. Interacts (via C-terminus) with CAMSAP2; this interaction is much stronger in the presence of PDE4DIP isoform 2. Interacts with CAMSAP3. Interacts (via C-terminus) with the gamma-tubulin ring complex (gamma-TuRC), composed of gamma-tubulin, TUBGCP2, TUBGCP3, TUBGCP4, TUBGCP5 and TUBGCP6.

The protein localises to the golgi apparatus. Its subcellular location is the cytoplasm. It localises to the cytoskeleton. It is found in the microtubule organizing center. The protein resides in the centrosome. Functionally, scaffolding protein that assembles several protein kinases and phosphatases on the centrosome and Golgi apparatus. Required to maintain the integrity of the Golgi apparatus. Required for microtubule nucleation at the cis-side of the Golgi apparatus. Required for association of the centrosomes with the poles of the bipolar mitotic spindle during metaphase. In complex with PDE4DIP isoform 2/MMG8/SMYLE, recruits CAMSAP2 to the Golgi apparatus and tethers non-centrosomal minus-end microtubules to the Golgi, an important step for polarized cell movement. In complex with PDE4DIP isoform 2, EB1/MAPRE1 and CDK5RAP2, contributes to microtubules nucleation and extension also from the centrosome to the cell periphery. The chain is A-kinase anchor protein 9 (Akap9) from Mus musculus (Mouse).